The following is a 535-amino-acid chain: Arylsulfatase K (535 aa).

Residues 1–21 form the signal peptide; it reads MGSGGPLLLLRGLLLVGAAYC. The Ca(2+) site is built by D41 and C81. The active-site Nucleophile is the C81. Position 81 is a 3-oxoalanine (Cys) (C81). K129 is a binding site for substrate. A glycan (N-linked (GlcNAc...) asparagine) is linked at N194. H252 is a binding site for substrate. N263 carries an N-linked (GlcNAc...) asparagine glycan. Residues D314 and H315 each coordinate Ca(2+). N376, N414, and N499 each carry an N-linked (GlcNAc...) asparagine glycan.

This sequence belongs to the sulfatase family. The cofactor is Ca(2+). In terms of processing, the conversion to 3-oxoalanine (also known as C-formylglycine, FGly), of a serine or cysteine residue in prokaryotes and of a cysteine residue in eukaryotes, is critical for catalytic activity.

The protein resides in the secreted. The protein localises to the lysosome. It catalyses the reaction an aryl sulfate + H2O = a phenol + sulfate + H(+). It carries out the reaction Hydrolysis of the 2-sulfate groups of the 2-O-sulfo-D-glucuronate residues of chondroitin sulfate, heparin and heparitin sulfate.. Its function is as follows. Catalyzes the hydrolysis of pseudosubstrates such as p-nitrocatechol sulfate and p-nitrophenyl sulfate. Catalyzes the hydrolysis of the 2-sulfate groups of the 2-O-sulfo-D-glucuronate residues of chondroitin sulfate, heparin and heparitin sulfate. Acts selectively on 2-sulfoglucuronate and lacks activity against 2-sulfoiduronate. The polypeptide is Arylsulfatase K (ARSK) (Gallus gallus (Chicken)).